Reading from the N-terminus, the 1138-residue chain is Phosphatidylserine decarboxylase proenzyme 2 (1138 aa).

The region spanning 1 to 122 (MRIIKGRKRG…SNSGLSSHSH (122 aa)) is the C2 1 domain. Disordered stretches follow at residues 90–166 (TGAP…PGST), 269–305 (MRSS…DTDL), and 413–448 (AVSE…REDS). Residues 98–121 (SRPRTTTANTSSSTLSNSGLSSHS) show a composition bias toward low complexity. Polar residues predominate over residues 125–135 (RNLNVTSKGNQ). The span at 136 to 166 (TSTSINSVSSSATPAPSHSSSSLSTTGPGST) shows a compositional bias: low complexity. The segment covering 293 to 305 (EIRREKPYSDTDL) has biased composition (basic and acidic residues). Residues 421–448 (SVDDEESENQQESDEEFDIYNEDEREDS) are compositionally biased toward acidic residues. Residues 478–600 (RRAKSNFFIS…QQQQHENEWI (123 aa)) form the C2 2 domain. Ca(2+)-binding residues include Asp571, Ser574, and Asp577. Catalysis depends on charge relay system; for autoendoproteolytic cleavage activity residues Asp899, His956, and Ser1043. Ser1043 acts as the Schiff-base intermediate with substrate; via pyruvic acid; for decarboxylase activity in catalysis. Residue Ser1043 is modified to Pyruvic acid (Ser); by autocatalysis.

Belongs to the phosphatidylserine decarboxylase family. PSD-B subfamily. Eukaryotic type II sub-subfamily. As to quaternary structure, heterodimer of a large membrane-associated beta subunit and a small pyruvoyl-containing alpha subunit. Interacts with pstB2/PDR17. This interaction may be a means to structurally tether the donor membrane (ER) harboring PstB2/PDR17 to acceptor membranes (Golgi/endosomes) harboring PSD2 during PtdSer transport to the site of PtdEtn synthesis. It depends on pyruvate as a cofactor. Ca(2+) is required as a cofactor. Post-translationally, is synthesized initially as an inactive proenzyme. Formation of the active enzyme involves a self-maturation process in which the active site pyruvoyl group is generated from an internal serine residue via an autocatalytic post-translational modification. Two non-identical subunits are generated from the proenzyme in this reaction, and the pyruvate is formed at the N-terminus of the alpha chain, which is derived from the carboxyl end of the proenzyme. The autoendoproteolytic cleavage occurs by a canonical serine protease mechanism, in which the side chain hydroxyl group of the serine supplies its oxygen atom to form the C-terminus of the beta chain, while the remainder of the serine residue undergoes an oxidative deamination to produce ammonia and the pyruvoyl prosthetic group on the alpha chain. During this reaction, the Ser that is part of the protease active site of the proenzyme becomes the pyruvoyl prosthetic group, which constitutes an essential element of the active site of the mature decarboxylase.

The protein localises to the golgi apparatus membrane. It localises to the endosome membrane. The catalysed reaction is a 1,2-diacyl-sn-glycero-3-phospho-L-serine + H(+) = a 1,2-diacyl-sn-glycero-3-phosphoethanolamine + CO2. Its pathway is phospholipid metabolism; phosphatidylethanolamine biosynthesis; phosphatidylethanolamine from CDP-diacylglycerol: step 2/2. Its function is as follows. Catalyzes the formation of phosphatidylethanolamine (PtdEtn) from phosphatidylserine (PtdSer). Plays a central role in phospholipid metabolism and in the interorganelle trafficking of phosphatidylserine. Phosphatidylethanolamine produced by PSD2 is insufficient to completely provide the PtdEtn pool required by mitochondria under respiratory conditions. PSD2 is also involved in the PtdSer transport step to the site of PtdEtn synthesis on the Golgi/endosome membranes. Required for normal heavy metal resistance. The protein is Phosphatidylserine decarboxylase proenzyme 2 of Saccharomyces cerevisiae (strain ATCC 204508 / S288c) (Baker's yeast).